Consider the following 133-residue polypeptide: Large ribosomal subunit protein uL22c (133 aa).

This sequence belongs to the universal ribosomal protein uL22 family. Part of the 50S ribosomal subunit.

The protein localises to the plastid. It localises to the chloroplast. This protein binds specifically to 23S rRNA. In terms of biological role, the globular domain of the protein is located near the polypeptide exit tunnel on the outside of the subunit, while an extended beta-hairpin is found that lines the wall of the exit tunnel in the center of the 70S ribosome. The sequence is that of Large ribosomal subunit protein uL22c (rpl22) from Manihot esculenta (Cassava).